The following is a 236-amino-acid chain: Protein INCA1 (236 aa).

The residue at position 23 (serine 23) is a Phosphoserine. Residues 75–99 (GLYPPEQLPPPEMLWRRKKRRPCLE) are interaction with CCNA1 and CCNA1/CDK2 complex; essential for CDK2 inhibitory activity. The short motif at 90–95 (RRKKRR) is the Nuclear localization signal element. Threonine 182 carries the post-translational modification Phosphothreonine. Phosphoserine is present on residues serine 191 and serine 194.

Belongs to the INCA family. In terms of assembly, interacts with CCNA1. Interacts with CCNA2, CCNB1 and CCNE1. Found in a complex with CCNA1 and CDK2. Interacts with ZNF16; the interaction inhibits INCA1 activity and induces the cell cycle process. Interacts with SPACA9. Interacts with the CCNA1/CDK2 complex. Interacts with ING5, DAZAP2, RNF26, USP15, SPOUT1, DPH7, TRIM26 and RAB5C. Phosphorylated when part of a complex with CCNA1 and CDK2. Strongly phosphorylated by CDK2 on its C-terminal region spanning amino acid 149-221. Less intensively phosphorylated by CDK2 on its first 75 amino acid residues. Detected in testis, and at lower levels in ovary. Detected at very low levels in testis tumors. Down-regulated in bone marrow cells in acute myeloid and lymphoid leukemia patients as compared with normal bone marrow cells.

Its subcellular location is the nucleus. It is found in the cytoplasm. In terms of biological role, binds to CDK2-bound cyclins and inhibits the kinase activity of CDK2; binding to cyclins is critical for its function as CDK inhibitor. Inhibits cell growth and cell proliferation and may play a role in cell cycle control. Required for ING5-mediated regulation of S-phase progression, enhancement of Fas-induced apoptosis and inhibition of cell growth. This chain is Protein INCA1 (INCA1), found in Homo sapiens (Human).